Consider the following 606-residue polypeptide: Fructan 6-exohydrolase (606 aa).

The first 21 residues, 1–21 (MAPNNGSWLVLSISMMLLSHG), serve as a signal peptide directing secretion. Asn5 carries N-linked (GlcNAc...) asparagine glycosylation. The active site involves Asp70. N-linked (GlcNAc...) asparagine glycosylation is found at Asn110, Asn164, Asn193, Asn237, and Asn346. Cys445 and Cys491 form a disulfide bridge. 4 N-linked (GlcNAc...) asparagine glycosylation sites follow: Asn564, Asn585, Asn590, and Asn593.

This sequence belongs to the glycosyl hydrolase 32 family.

The enzyme catalyses Hydrolysis of terminal, non-reducing (2-&gt;6)-linked beta-D-fructofuranose residues in fructans.. Its activity is regulated as follows. Not inhibited by sucrose. Hydrolyzes levan-type beta-(2-&gt;6)-linked fructans to fructose, but not inulin-type beta-(2-&gt;1)-linked fructans. In Beta vulgaris (Sugar beet), this protein is Fructan 6-exohydrolase.